The primary structure comprises 455 residues: Beta-cyclopiazonate dehydrogenase (455 aa).

Positions 1–20 (MATRIASFIGISTVASLALA) are cleaved as a signal peptide.

The protein belongs to the beta-cyclopiazonate dehydrogenase family. Requires FAD as cofactor.

It carries out the reaction beta-cyclopiazonate + A = alpha-cyclopiazonate + AH2. Beta-cyclopiazonate dehydrogenase involved in the synthesis of the fungal neurotoxin alpha-cyclopiazonic acid (CPA). CpaO carries out the dehydrogenation of beta-CPA to yield an unstable enimine product, which is captured by intramolecular cyclization to create the pentacyclic fused scaffold of alpha-cyclopiazonate. This Aspergillus flavus (strain ATCC 200026 / FGSC A1120 / IAM 13836 / NRRL 3357 / JCM 12722 / SRRC 167) protein is Beta-cyclopiazonate dehydrogenase.